A 988-amino-acid chain; its full sequence is Protein SEMI-ROLLED LEAF 2 (988 aa).

The tract at residues 844–865 (SVDGGLHESPITNTGSSISKTT) is disordered. Residues 853–865 (PITNTGSSISKTT) are compositionally biased toward polar residues.

As to expression, expressed in root tips, and in the vascular bundles of leaf blades, leaf sheaths, and roots, especially in their sclerenchymatous cells.

The protein localises to the nucleus. Its subcellular location is the cytoplasm. Functionally, functions in regulating leaf rolling through abaxial side leaf cell differentiation. May be involved in the transdifferentiation process from mesophyll cells to sclerenchymatous cells. The sequence is that of Protein SEMI-ROLLED LEAF 2 from Oryza sativa subsp. japonica (Rice).